Consider the following 236-residue polypeptide: 6-carboxyhexanoate--CoA ligase (236 aa).

The protein belongs to the BioW family. As to quaternary structure, homodimer. The cofactor is Mg(2+).

The enzyme catalyses heptanedioate + ATP + CoA = 6-carboxyhexanoyl-CoA + AMP + diphosphate. The protein operates within metabolic intermediate metabolism; pimeloyl-CoA biosynthesis; pimeloyl-CoA from pimelate: step 1/1. In terms of biological role, catalyzes the transformation of pimelate into pimeloyl-CoA with concomitant hydrolysis of ATP to AMP. In Methanococcus aeolicus (strain ATCC BAA-1280 / DSM 17508 / OCM 812 / Nankai-3), this protein is 6-carboxyhexanoate--CoA ligase.